A 348-amino-acid chain; its full sequence is Phenylalanine--tRNA ligase alpha subunit (348 aa).

Residue Glu-259 participates in Mg(2+) binding.

It belongs to the class-II aminoacyl-tRNA synthetase family. Phe-tRNA synthetase alpha subunit type 1 subfamily. As to quaternary structure, tetramer of two alpha and two beta subunits. Mg(2+) is required as a cofactor.

The protein resides in the cytoplasm. It catalyses the reaction tRNA(Phe) + L-phenylalanine + ATP = L-phenylalanyl-tRNA(Phe) + AMP + diphosphate + H(+). The polypeptide is Phenylalanine--tRNA ligase alpha subunit (Lacticaseibacillus paracasei (strain ATCC 334 / BCRC 17002 / CCUG 31169 / CIP 107868 / KCTC 3260 / NRRL B-441) (Lactobacillus paracasei)).